Here is a 309-residue protein sequence, read N- to C-terminus: Aspartate carbamoyltransferase catalytic subunit (309 aa).

Carbamoyl phosphate is bound by residues R58 and T59. K87 contacts L-aspartate. Carbamoyl phosphate contacts are provided by R108, H136, and Q139. 2 residues coordinate L-aspartate: R168 and R229. Positions 268 and 269 each coordinate carbamoyl phosphate.

It belongs to the aspartate/ornithine carbamoyltransferase superfamily. ATCase family. Heterooligomer of catalytic and regulatory chains.

The enzyme catalyses carbamoyl phosphate + L-aspartate = N-carbamoyl-L-aspartate + phosphate + H(+). It functions in the pathway pyrimidine metabolism; UMP biosynthesis via de novo pathway; (S)-dihydroorotate from bicarbonate: step 2/3. Its function is as follows. Catalyzes the condensation of carbamoyl phosphate and aspartate to form carbamoyl aspartate and inorganic phosphate, the committed step in the de novo pyrimidine nucleotide biosynthesis pathway. The sequence is that of Aspartate carbamoyltransferase catalytic subunit from Methanosarcina mazei (strain ATCC BAA-159 / DSM 3647 / Goe1 / Go1 / JCM 11833 / OCM 88) (Methanosarcina frisia).